We begin with the raw amino-acid sequence, 97 residues long: YcgL domain-containing protein PSPPH_1548 (97 aa).

The region spanning 3-87 is the YcgL domain; sequence RICSIYRSPK…AEDDYIEHLP (85 aa).

In Pseudomonas savastanoi pv. phaseolicola (strain 1448A / Race 6) (Pseudomonas syringae pv. phaseolicola (strain 1448A / Race 6)), this protein is YcgL domain-containing protein PSPPH_1548.